We begin with the raw amino-acid sequence, 472 residues long: Tyrosine--tRNA ligase, mitochondrial (472 aa).

Tyrosine 72 contributes to the L-tyrosine binding site. Aspartate 76 lines the ATP pocket. The 'HIGH' region motif lies at proline 77–histidine 86. Residues aspartate 116, tyrosine 216, glutamine 220, aspartate 223, and glutamine 242 each contribute to the L-tyrosine site. ATP-binding residues include isoleucine 269 and lysine 279. Residues lysine 276–serine 280 carry the 'KMSKS' region motif. 2 positions are modified to N6-acetyllysine: lysine 350 and lysine 362.

Belongs to the class-I aminoacyl-tRNA synthetase family. Homodimer.

It is found in the mitochondrion matrix. The enzyme catalyses tRNA(Tyr) + L-tyrosine + ATP = L-tyrosyl-tRNA(Tyr) + AMP + diphosphate + H(+). Catalyzes the attachment of tyrosine to tRNA(Tyr) in a two-step reaction: tyrosine is first activated by ATP to form Tyr-AMP and then transferred to the acceptor end of tRNA(Tyr). This Mus musculus (Mouse) protein is Tyrosine--tRNA ligase, mitochondrial (Yars2).